Reading from the N-terminus, the 762-residue chain is Chondroadherin-like protein (762 aa).

The signal sequence occupies residues 1–30 (MEGPRSSTHVPLVLPLLVLLLLAPARQAAA). Residues 31–62 (QRCPQACICDNSRRHVACRYQNLTEVPDAIPE) enclose the LRRNT 1 domain. N-linked (GlcNAc...) asparagine glycosylation is present at N52. 9 LRR repeats span residues 87–108 (HLTH…AFRG), 111–132 (RLLL…ALDG), 135–156 (SLRR…TFGA), 159–180 (ALAT…AFQG), 183–204 (RVRW…ALAG), 207–228 (ALRR…VLSQ), 231–252 (GLAR…DGLA), 255–276 (GLRE…AFAH), and 279–300 (RLHT…QGPG). One can recognise an LRRCT 1 domain in the interval 310 to 359 (NPLWCGCQARPLLEWLARARVRSDGACQGPRRLRGEALDALRPWDLRCPG). Positions 364 to 390 (EEEELEERAVAGPRAPPRGPPRGPGEE) are disordered. The segment covering 377–386 (RAPPRGPPRG) has biased composition (pro residues). Residues 387-425 (PGEERAVAPCPRACVCVPESRHSSCEGCGLQAVPRGFPS) form the LRRNT 2 domain. Cysteines 396 and 411 form a disulfide. 10 LRR repeats span residues 426–447 (DTQL…AFPG), 450–471 (HLVS…ALAG), 474–495 (RLIY…ALEG), 498–519 (RLGY…ALRA), 522–543 (SLFS…DLGR), 546–566 (ALRW…GALG), 570–591 (ELEK…ALEG), 594–615 (ALLE…AFQP), 619–640 (SLQH…AFSG), and 644–665 (GLQS…PSLS). A glycan (N-linked (GlcNAc...) asparagine) is linked at N626. One can recognise an LRRCT 2 domain in the interval 675–724 (NPFHCDCQLLPLHRWLTGLNLRVGATCATPPNARGQRVKAAAAVFEDCPG). Disulfide bonds link C679/C722 and C681/C701. A compositionally biased stretch (basic residues) spans 728-745 (RKAKRTPASRPSARRTPI). Residues 728–762 (RKAKRTPASRPSARRTPIKGRQCGADKVGKEKGRL) are disordered.

The protein belongs to the small leucine-rich proteoglycan (SLRP) family. SLRP class IV subfamily. In terms of assembly, associates with collagen and binds to collagen fibrils.

The protein resides in the secreted. It is found in the extracellular space. The protein localises to the extracellular matrix. Functionally, potential negative modulator of chondrocyte differentiation. Inhibits collagen fibrillogenesis in vitro. May influence chondrocyte's differentiation by acting on its cellular collagenous microenvironment. This is Chondroadherin-like protein (CHADL) from Homo sapiens (Human).